The chain runs to 297 residues: Magnetosome protein MamB (297 aa).

At 1-12 the chain is on the cytoplasmic side; that stretch reads MKFENCRDCREE. The segment at 1–214 is transmembrane domain (TMD); the sequence is MKFENCRDCR…GLMDSSVDTE (214 aa). Residues 13 to 33 traverse the membrane as a helical segment; that stretch reads VVWWAFTADICMTLFKGILGL. The Lumenal segment spans residues 34–83; the sequence is MSGSVALVADSLHSGADVVASGVTQLSLKISNKPADERYPFGYGNIQYIS. The chain crosses the membrane as a helical span at residues 84 to 104; sequence SAIVGSLLLIGASFLMYGSVV. Over 105–112 the chain is Cytoplasmic; sequence KLISGTYE. The chain crosses the membrane as a helical span at residues 113–133; that stretch reads APSIFAALGASVTVIVNELMY. Residues 134 to 164 lie on the Lumenal side of the membrane; sequence RYQICVGNENNSPAIIANAWDNRSDAISSAA. Residues 165–185 traverse the membrane as a helical segment; it reads VMVGVIASVIGFPIADTIAAI. Over 186-297 the chain is Cytoplasmic; the sequence is GVSALVGHIG…PAPAAVTVRV (112 aa). The tract at residues 215–297 is C-terminal domain (CTD); it reads LLQTAWQIAT…PAPAAVTVRV (83 aa).

It belongs to the cation diffusion facilitator (CDF) transporter (TC 2.A.4) family. As to quaternary structure, forms homodimers via its C-terminal domain, may form higher order multimers that are sensitive to reducing agent. Probably interacts with MamE. Interacts with MamM via their C-terminal domains.

The protein localises to the cell inner membrane. Its subcellular location is the magnetosome membrane. Functionally, plays a dual, essential role in magnetosome formation; required for magnetosome vesicle formation as well as biomineralization. Requires heterodimerization with MamM for stability. Probably binds and transports iron. One of 7 genes (mamLQBIEMO) able to induce magnetosome membrane biogenesis; coexpression of mamLQRBIEMO in a deletion of the 17 gene mamAB operon restores magnetosome vesicle formation but not magnetite biosynthesis. In Magnetospirillum gryphiswaldense (strain DSM 6361 / JCM 21280 / NBRC 15271 / MSR-1), this protein is Magnetosome protein MamB.